A 321-amino-acid chain; its full sequence is Acetyl-coenzyme A carboxylase carboxyl transferase subunit beta, chloroplastic (321 aa).

The CoA carboxyltransferase N-terminal domain maps to 47-321 (LWAQCDNCEN…FWFYVLRSSL (275 aa)). Zn(2+) is bound by residues Cys-51, Cys-54, Cys-70, and Cys-73. The segment at 51-73 (CDNCENLLYLRFLRENQSVCKEC) adopts a C4-type zinc-finger fold.

It belongs to the AccD/PCCB family. As to quaternary structure, acetyl-CoA carboxylase is a heterohexamer composed of biotin carboxyl carrier protein, biotin carboxylase and 2 subunits each of ACCase subunit alpha and ACCase plastid-coded subunit beta (accD). Zn(2+) serves as cofactor.

Its subcellular location is the plastid. The protein localises to the chloroplast stroma. The enzyme catalyses N(6)-carboxybiotinyl-L-lysyl-[protein] + acetyl-CoA = N(6)-biotinyl-L-lysyl-[protein] + malonyl-CoA. It participates in lipid metabolism; malonyl-CoA biosynthesis; malonyl-CoA from acetyl-CoA: step 1/1. In terms of biological role, component of the acetyl coenzyme A carboxylase (ACC) complex. Biotin carboxylase (BC) catalyzes the carboxylation of biotin on its carrier protein (BCCP) and then the CO(2) group is transferred by the transcarboxylase to acetyl-CoA to form malonyl-CoA. The chain is Acetyl-coenzyme A carboxylase carboxyl transferase subunit beta, chloroplastic from Pinus thunbergii (Japanese black pine).